A 78-amino-acid chain; its full sequence is MSRVCQVTGKRPVSGNNRSHALNATKRRFLPNLHSHRFWVESEKRFVTLRVSAKGMRVIDKKGIESVLADLRARGEKY.

Belongs to the bacterial ribosomal protein bL28 family.

The chain is Large ribosomal subunit protein bL28 from Proteus mirabilis (strain HI4320).